A 204-amino-acid polypeptide reads, in one-letter code: MEVMSVIPYVIEQTGRGERSYDIYSRLLKDRIIFVGTPVESQMANSIVAQLLLLDSQNPEQEIQMYINCPGGEVYAGLAIYDTMRYIKAPVSTICVGMAMSMGSVLLMAGDKGKRMALPNSRIMIHQGSAGFRGNTPDLEVQAKEVLKLRDTLVDIYHKHTDLPQEKLLRDMERDYFMSPEEALKYGLIDQVIDQTRENRGGEE.

Ser-101 serves as the catalytic Nucleophile. The active site involves His-126.

Belongs to the peptidase S14 family. In terms of assembly, fourteen ClpP subunits assemble into 2 heptameric rings which stack back to back to give a disk-like structure with a central cavity, resembling the structure of eukaryotic proteasomes.

It localises to the cytoplasm. The catalysed reaction is Hydrolysis of proteins to small peptides in the presence of ATP and magnesium. alpha-casein is the usual test substrate. In the absence of ATP, only oligopeptides shorter than five residues are hydrolyzed (such as succinyl-Leu-Tyr-|-NHMec, and Leu-Tyr-Leu-|-Tyr-Trp, in which cleavage of the -Tyr-|-Leu- and -Tyr-|-Trp bonds also occurs).. In terms of biological role, cleaves peptides in various proteins in a process that requires ATP hydrolysis. Has a chymotrypsin-like activity. Plays a major role in the degradation of misfolded proteins. The polypeptide is ATP-dependent Clp protease proteolytic subunit (Deinococcus radiodurans (strain ATCC 13939 / DSM 20539 / JCM 16871 / CCUG 27074 / LMG 4051 / NBRC 15346 / NCIMB 9279 / VKM B-1422 / R1)).